Here is a 120-residue protein sequence, read N- to C-terminus: Phosphoribosyl-ATP pyrophosphatase (120 aa).

The interval 97-120 is disordered; that stretch reads REGTSGLVEKASRPAKKDSGTADS. Basic and acidic residues predominate over residues 106–120; it reads KASRPAKKDSGTADS.

It belongs to the PRA-PH family.

Its subcellular location is the cytoplasm. It catalyses the reaction 1-(5-phospho-beta-D-ribosyl)-ATP + H2O = 1-(5-phospho-beta-D-ribosyl)-5'-AMP + diphosphate + H(+). Its pathway is amino-acid biosynthesis; L-histidine biosynthesis; L-histidine from 5-phospho-alpha-D-ribose 1-diphosphate: step 2/9. In Rhodopirellula baltica (strain DSM 10527 / NCIMB 13988 / SH1), this protein is Phosphoribosyl-ATP pyrophosphatase.